The following is an 85-amino-acid chain: Small ribosomal subunit protein uS17 (85 aa).

Belongs to the universal ribosomal protein uS17 family. As to quaternary structure, part of the 30S ribosomal subunit.

Its function is as follows. One of the primary rRNA binding proteins, it binds specifically to the 5'-end of 16S ribosomal RNA. This chain is Small ribosomal subunit protein uS17, found in Anaeromyxobacter dehalogenans (strain 2CP-1 / ATCC BAA-258).